Reading from the N-terminus, the 293-residue chain is 4-hydroxy-tetrahydrodipicolinate synthase (293 aa).

T45 provides a ligand contact to pyruvate. The Proton donor/acceptor role is filled by Y133. Residue K161 is the Schiff-base intermediate with substrate of the active site. I203 serves as a coordination point for pyruvate.

The protein belongs to the DapA family. As to quaternary structure, homotetramer; dimer of dimers.

Its subcellular location is the cytoplasm. The enzyme catalyses L-aspartate 4-semialdehyde + pyruvate = (2S,4S)-4-hydroxy-2,3,4,5-tetrahydrodipicolinate + H2O + H(+). Its pathway is amino-acid biosynthesis; L-lysine biosynthesis via DAP pathway; (S)-tetrahydrodipicolinate from L-aspartate: step 3/4. Catalyzes the condensation of (S)-aspartate-beta-semialdehyde [(S)-ASA] and pyruvate to 4-hydroxy-tetrahydrodipicolinate (HTPA). The protein is 4-hydroxy-tetrahydrodipicolinate synthase of Shewanella denitrificans (strain OS217 / ATCC BAA-1090 / DSM 15013).